We begin with the raw amino-acid sequence, 59 residues long: MLNIFSLICLNSALHSSSFFFAKLPEAYAFFNPIVDVMPVIPVLFFLLALVWQAAVSFR.

A propeptide spanning residues 1-22 is cleaved from the precursor; sequence MLNIFSLICLNSALHSSSFFFA. Residues 38 to 58 form a helical membrane-spanning segment; sequence MPVIPVLFFLLALVWQAAVSF.

This sequence belongs to the PsbK family. As to quaternary structure, PSII is composed of 1 copy each of membrane proteins PsbA, PsbB, PsbC, PsbD, PsbE, PsbF, PsbH, PsbI, PsbJ, PsbK, PsbL, PsbM, PsbT, PsbX, PsbY, PsbZ, Psb30/Ycf12, at least 3 peripheral proteins of the oxygen-evolving complex and a large number of cofactors. It forms dimeric complexes.

Its subcellular location is the plastid. The protein localises to the chloroplast thylakoid membrane. One of the components of the core complex of photosystem II (PSII). PSII is a light-driven water:plastoquinone oxidoreductase that uses light energy to abstract electrons from H(2)O, generating O(2) and a proton gradient subsequently used for ATP formation. It consists of a core antenna complex that captures photons, and an electron transfer chain that converts photonic excitation into a charge separation. In Calycanthus floridus var. glaucus (Eastern sweetshrub), this protein is Photosystem II reaction center protein K.